The primary structure comprises 174 residues: UPF0316 protein lmo1776 (174 aa).

Helical transmembrane passes span 4–24, 36–56, and 62–82; these read GIFI…IYTV, LAAL…SLVL, and IANV…GMKI.

The protein belongs to the UPF0316 family.

It is found in the cell membrane. The chain is UPF0316 protein lmo1776 from Listeria monocytogenes serovar 1/2a (strain ATCC BAA-679 / EGD-e).